Consider the following 368-residue polypeptide: 3-dehydroquinate synthase (368 aa).

Residues 110–114 (GVIGD), 134–135 (TS), Lys-147, and Lys-156 contribute to the NAD(+) site. The Zn(2+) site is built by Glu-189, His-254, and His-271.

The protein belongs to the sugar phosphate cyclases superfamily. Dehydroquinate synthase family. NAD(+) is required as a cofactor. Co(2+) serves as cofactor. Requires Zn(2+) as cofactor.

The protein resides in the cytoplasm. The enzyme catalyses 7-phospho-2-dehydro-3-deoxy-D-arabino-heptonate = 3-dehydroquinate + phosphate. Its pathway is metabolic intermediate biosynthesis; chorismate biosynthesis; chorismate from D-erythrose 4-phosphate and phosphoenolpyruvate: step 2/7. Functionally, catalyzes the conversion of 3-deoxy-D-arabino-heptulosonate 7-phosphate (DAHP) to dehydroquinate (DHQ). The protein is 3-dehydroquinate synthase of Thermosynechococcus vestitus (strain NIES-2133 / IAM M-273 / BP-1).